Consider the following 530-residue polypeptide: NADH-quinone oxidoreductase subunit C/D (530 aa).

The interval 1–144 (MEEIKYIEPA…NPLRMDNEET (144 aa)) is NADH dehydrogenase I subunit C. The tract at residues 171 to 530 (EYVVNIGPQH…LDYVVPDIDR (360 aa)) is NADH dehydrogenase I subunit D.

The protein in the N-terminal section; belongs to the complex I 30 kDa subunit family. This sequence in the C-terminal section; belongs to the complex I 49 kDa subunit family. In terms of assembly, NDH-1 is composed of 13 different subunits. Subunits NuoB, CD, E, F, and G constitute the peripheral sector of the complex.

It is found in the cell inner membrane. The catalysed reaction is a quinone + NADH + 5 H(+)(in) = a quinol + NAD(+) + 4 H(+)(out). Functionally, NDH-1 shuttles electrons from NADH, via FMN and iron-sulfur (Fe-S) centers, to quinones in the respiratory chain. The immediate electron acceptor for the enzyme in this species is believed to be a menaquinone. Couples the redox reaction to proton translocation (for every two electrons transferred, four hydrogen ions are translocated across the cytoplasmic membrane), and thus conserves the redox energy in a proton gradient. The protein is NADH-quinone oxidoreductase subunit C/D of Bacteroides fragilis (strain ATCC 25285 / DSM 2151 / CCUG 4856 / JCM 11019 / LMG 10263 / NCTC 9343 / Onslow / VPI 2553 / EN-2).